The primary structure comprises 301 residues: N-acetylmuramic acid 6-phosphate etherase (301 aa).

Residues Ile55–Lys215 form the SIS domain. Catalysis depends on Glu83, which acts as the Proton donor. Glu111 is an active-site residue.

Belongs to the GCKR-like family. MurNAc-6-P etherase subfamily. In terms of assembly, homodimer.

It catalyses the reaction N-acetyl-D-muramate 6-phosphate + H2O = N-acetyl-D-glucosamine 6-phosphate + (R)-lactate. Its pathway is amino-sugar metabolism; 1,6-anhydro-N-acetylmuramate degradation. It participates in amino-sugar metabolism; N-acetylmuramate degradation. It functions in the pathway cell wall biogenesis; peptidoglycan recycling. Specifically catalyzes the cleavage of the D-lactyl ether substituent of MurNAc 6-phosphate, producing GlcNAc 6-phosphate and D-lactate. Together with AnmK, is also required for the utilization of anhydro-N-acetylmuramic acid (anhMurNAc) either imported from the medium or derived from its own cell wall murein, and thus plays a role in cell wall recycling. The chain is N-acetylmuramic acid 6-phosphate etherase from Burkholderia lata (strain ATCC 17760 / DSM 23089 / LMG 22485 / NCIMB 9086 / R18194 / 383).